Consider the following 159-residue polypeptide: 3-dehydroquinate dehydratase (159 aa).

The active-site Proton acceptor is the Tyr31. Residues Asn82, His88, and Asp95 each contribute to the substrate site. Residue His109 is the Proton donor of the active site. Residues 110 to 111 (IS) and Arg120 each bind substrate.

It belongs to the type-II 3-dehydroquinase family. Homododecamer.

It carries out the reaction 3-dehydroquinate = 3-dehydroshikimate + H2O. It participates in metabolic intermediate biosynthesis; chorismate biosynthesis; chorismate from D-erythrose 4-phosphate and phosphoenolpyruvate: step 3/7. Catalyzes a trans-dehydration via an enolate intermediate. The chain is 3-dehydroquinate dehydratase from Streptomyces avermitilis (strain ATCC 31267 / DSM 46492 / JCM 5070 / NBRC 14893 / NCIMB 12804 / NRRL 8165 / MA-4680).